The primary structure comprises 332 residues: Phospholipase A2 inhibitor beta (332 aa).

Residues 1-23 (MKSSVPSLLFVSLVMSLNSYTQQ) form the signal peptide. An N-linked (GlcNAc...) asparagine glycan is attached at N35. 8 LRR repeats span residues 78-101 (LPNLQELHLSNNRLKTLPSGLFRN), 103-125 (PELHTLDLSTNLLEDLPPEIFTS), 127-149 (TSLTLLSISENRLAKLRLSWFET), 150-173 (LKELRILSLDNNQLKEVPISCFDK), 175-197 (EKLTFLDLSSNHLHRLSPDMFSG), 198-221 (LDNLERLSLENNPIRCIAPKSFHG), 223-245 (PKLSIISLKNCSLTNIITGVFQP), and 247-269 (NHXVLLDLSDNELTMLDPPVAIP). An N-linked (GlcNAc...) asparagine glycan is attached at N232. The N-linked (GlcNAc...) asparagine glycan is linked to N272. The region spanning 280–331 (NPWACNCRMDNLLTWVKEHKIDLYSKQEIVCAFPKSFKGEEATSLHRSQICP) is the LRRCT domain.

The protein belongs to the beta-type phospholipase A2 inhibitor family. As to quaternary structure, homotrimer.

The protein localises to the secreted. Its function is as follows. Inhibits the enzymatic activity of the basic phospholipase A2 (PLA2). The polypeptide is Phospholipase A2 inhibitor beta (Elaphe climacophora (Japanese rat snake)).